A 316-amino-acid chain; its full sequence is Acetyl-coenzyme A carboxylase carboxyl transferase subunit alpha (316 aa).

One can recognise a CoA carboxyltransferase C-terminal domain in the interval 40 to 293 (LERRSKDALR…GETIENGFRE (254 aa)).

The protein belongs to the AccA family. In terms of assembly, acetyl-CoA carboxylase is a heterohexamer composed of biotin carboxyl carrier protein (AccB), biotin carboxylase (AccC) and two subunits each of ACCase subunit alpha (AccA) and ACCase subunit beta (AccD).

It is found in the cytoplasm. The enzyme catalyses N(6)-carboxybiotinyl-L-lysyl-[protein] + acetyl-CoA = N(6)-biotinyl-L-lysyl-[protein] + malonyl-CoA. Its pathway is lipid metabolism; malonyl-CoA biosynthesis; malonyl-CoA from acetyl-CoA: step 1/1. In terms of biological role, component of the acetyl coenzyme A carboxylase (ACC) complex. First, biotin carboxylase catalyzes the carboxylation of biotin on its carrier protein (BCCP) and then the CO(2) group is transferred by the carboxyltransferase to acetyl-CoA to form malonyl-CoA. The chain is Acetyl-coenzyme A carboxylase carboxyl transferase subunit alpha from Chelativorans sp. (strain BNC1).